We begin with the raw amino-acid sequence, 147 residues long: Large ribosomal subunit protein uL13 (147 aa).

Belongs to the universal ribosomal protein uL13 family. In terms of assembly, part of the 50S ribosomal subunit.

In terms of biological role, this protein is one of the early assembly proteins of the 50S ribosomal subunit, although it is not seen to bind rRNA by itself. It is important during the early stages of 50S assembly. In Nocardioides sp. (strain ATCC BAA-499 / JS614), this protein is Large ribosomal subunit protein uL13.